Reading from the N-terminus, the 460-residue chain is ATP synthase subunit beta (460 aa).

150 to 157 (GGAGVGKT) is an ATP binding site.

This sequence belongs to the ATPase alpha/beta chains family. F-type ATPases have 2 components, CF(1) - the catalytic core - and CF(0) - the membrane proton channel. CF(1) has five subunits: alpha(3), beta(3), gamma(1), delta(1), epsilon(1). CF(0) has three main subunits: a(1), b(2) and c(9-12). The alpha and beta chains form an alternating ring which encloses part of the gamma chain. CF(1) is attached to CF(0) by a central stalk formed by the gamma and epsilon chains, while a peripheral stalk is formed by the delta and b chains.

Its subcellular location is the cell inner membrane. It carries out the reaction ATP + H2O + 4 H(+)(in) = ADP + phosphate + 5 H(+)(out). Functionally, produces ATP from ADP in the presence of a proton gradient across the membrane. The catalytic sites are hosted primarily by the beta subunits. In Klebsiella pneumoniae subsp. pneumoniae (strain ATCC 700721 / MGH 78578), this protein is ATP synthase subunit beta.